Here is a 232-residue protein sequence, read N- to C-terminus: Ubiquinone biosynthesis O-methyltransferase (232 aa).

Positions 36, 55, 76, and 120 each coordinate S-adenosyl-L-methionine.

This sequence belongs to the methyltransferase superfamily. UbiG/COQ3 family.

It carries out the reaction a 3-demethylubiquinol + S-adenosyl-L-methionine = a ubiquinol + S-adenosyl-L-homocysteine + H(+). The catalysed reaction is a 3-(all-trans-polyprenyl)benzene-1,2-diol + S-adenosyl-L-methionine = a 2-methoxy-6-(all-trans-polyprenyl)phenol + S-adenosyl-L-homocysteine + H(+). It participates in cofactor biosynthesis; ubiquinone biosynthesis. In terms of biological role, O-methyltransferase that catalyzes the 2 O-methylation steps in the ubiquinone biosynthetic pathway. This Thiobacillus denitrificans (strain ATCC 25259 / T1) protein is Ubiquinone biosynthesis O-methyltransferase.